Consider the following 214-residue polypeptide: Probable nicotinate-nucleotide adenylyltransferase (214 aa).

Belongs to the NadD family.

The catalysed reaction is nicotinate beta-D-ribonucleotide + ATP + H(+) = deamido-NAD(+) + diphosphate. It participates in cofactor biosynthesis; NAD(+) biosynthesis; deamido-NAD(+) from nicotinate D-ribonucleotide: step 1/1. In terms of biological role, catalyzes the reversible adenylation of nicotinate mononucleotide (NaMN) to nicotinic acid adenine dinucleotide (NaAD). The chain is Probable nicotinate-nucleotide adenylyltransferase from Rubrobacter xylanophilus (strain DSM 9941 / JCM 11954 / NBRC 16129 / PRD-1).